Reading from the N-terminus, the 301-residue chain is Ribosomal protein L11 methyltransferase (301 aa).

Residues Thr147, Gly168, Asp190, and Asn237 each contribute to the S-adenosyl-L-methionine site.

The protein belongs to the methyltransferase superfamily. PrmA family.

The protein resides in the cytoplasm. It carries out the reaction L-lysyl-[protein] + 3 S-adenosyl-L-methionine = N(6),N(6),N(6)-trimethyl-L-lysyl-[protein] + 3 S-adenosyl-L-homocysteine + 3 H(+). Methylates ribosomal protein L11. The sequence is that of Ribosomal protein L11 methyltransferase from Synechococcus sp. (strain RCC307).